The chain runs to 145 residues: Ribonuclease H (145 aa).

The 142-residue stretch at 1 to 142 (MDTPVYLYTD…ADDLANRGAA (142 aa)) folds into the RNase H type-1 domain. Mg(2+) contacts are provided by Asp10, Glu48, Asp70, and Asp134.

This sequence belongs to the RNase H family. Monomer. It depends on Mg(2+) as a cofactor.

It localises to the cytoplasm. The catalysed reaction is Endonucleolytic cleavage to 5'-phosphomonoester.. In terms of biological role, endonuclease that specifically degrades the RNA of RNA-DNA hybrids. This Neisseria meningitidis serogroup C / serotype 2a (strain ATCC 700532 / DSM 15464 / FAM18) protein is Ribonuclease H.